A 155-amino-acid polypeptide reads, in one-letter code: SsrA-binding protein (155 aa).

The protein belongs to the SmpB family.

Its subcellular location is the cytoplasm. Required for rescue of stalled ribosomes mediated by trans-translation. Binds to transfer-messenger RNA (tmRNA), required for stable association of tmRNA with ribosomes. tmRNA and SmpB together mimic tRNA shape, replacing the anticodon stem-loop with SmpB. tmRNA is encoded by the ssrA gene; the 2 termini fold to resemble tRNA(Ala) and it encodes a 'tag peptide', a short internal open reading frame. During trans-translation Ala-aminoacylated tmRNA acts like a tRNA, entering the A-site of stalled ribosomes, displacing the stalled mRNA. The ribosome then switches to translate the ORF on the tmRNA; the nascent peptide is terminated with the 'tag peptide' encoded by the tmRNA and targeted for degradation. The ribosome is freed to recommence translation, which seems to be the essential function of trans-translation. In Lactococcus lactis subsp. lactis (strain IL1403) (Streptococcus lactis), this protein is SsrA-binding protein.